The primary structure comprises 278 residues: S-formylglutathione hydrolase YeiG (278 aa).

Active-site charge relay system residues include serine 145, aspartate 223, and histidine 256.

Belongs to the esterase D family.

The enzyme catalyses S-formylglutathione + H2O = formate + glutathione + H(+). Functionally, serine hydrolase involved in the detoxification of formaldehyde. Hydrolyzes S-formylglutathione to glutathione and formate. In Escherichia coli (strain SMS-3-5 / SECEC), this protein is S-formylglutathione hydrolase YeiG (yeiG).